The chain runs to 404 residues: Homoserine O-succinyltransferase (404 aa).

Positions 1–25 are enriched in low complexity; it reads MTDIQADPAVTAADAAQADTSSPTA. The interval 1–30 is disordered; it reads MTDIQADPAVTAADAAQADTSSPTAHQGKP. An AB hydrolase-1 domain is found at 75-384; it reads NAVLICHALN…HGHDAFLLED (310 aa). S179 (nucleophile) is an active-site residue. Substrate is bound at residue R249. Residues D344 and H377 contribute to the active site. D378 is a binding site for substrate.

The protein belongs to the AB hydrolase superfamily. MetX family. As to quaternary structure, homodimer.

The protein resides in the cytoplasm. It catalyses the reaction L-homoserine + succinyl-CoA = O-succinyl-L-homoserine + CoA. It functions in the pathway amino-acid biosynthesis; L-methionine biosynthesis via de novo pathway; O-succinyl-L-homoserine from L-homoserine: step 1/1. In terms of biological role, transfers a succinyl group from succinyl-CoA to L-homoserine, forming succinyl-L-homoserine. The polypeptide is Homoserine O-succinyltransferase (Ralstonia pickettii (strain 12J)).